The primary structure comprises 251 residues: Capsid protein (251 aa).

Residues 3 to 20 carry the Bipartite nuclear localization signal motif; that stretch reads KRDLPWRSMAGTSKVSRN. The Nuclear localization signal signature appears at 35 to 49; sequence KAAEWVNRPMYRKPR. Residues 63–80 fold into a zinc finger; that stretch reads CEGPCKVQSFEQRHDISH. Positions 96 to 117 match the Nuclear export signal motif; that stretch reads ITHRVGKRFCVKSVYILGKIWM. The short motif at 195-242 is the Bipartite nuclear localization signal element; sequence KRFWKVNNHVVYNHQEAGKYENHTENALLLYMACTHASNPVYATLKIR.

This sequence belongs to the geminiviridae capsid protein family. As to quaternary structure, homomultimer. Binds to single-stranded and double-stranded viral DNA. Interacts (via nuclear localization signals) with host importin alpha-1a.

The protein localises to the virion. It is found in the host nucleus. Functionally, encapsidates the viral DNA into characteristic twinned ('geminate') particles. Binds the genomic viral ssDNA and shuttles it into and out of the cell nucleus. The CP of bipartite geminiviruses is not required for cell-to-cell or systemic movement. The chain is Capsid protein from Tomato mottle virus (isolate Florida) (ToMoV).